Here is a 529-residue protein sequence, read N- to C-terminus: Transcription factor BIM1 (529 aa).

Disordered regions lie at residues 1-91 (MELP…HVLP), 245-291 (KKES…RRSK), 425-450 (RVAS…EEVL), and 491-529 (AKQS…KTGQ). Over residues 76–86 (KPPPPAPPPPL) the composition is skewed to pro residues. Composition is skewed to basic and acidic residues over residues 255-265 (HRVDLRVKADV) and 282-291 (SATEQRRRSK). Residues 276–326 (TPRSKHSATEQRRRSKINDRFQMLRQLIPNSDQKRDKASFLLEVIEYIQFL) enclose the bHLH domain. The segment covering 426-438 (VASSEAVEPSPSS) has biased composition (low complexity). The span at 499–517 (FKDHEVREPVSRTRNDNVK) shows a compositional bias: basic and acidic residues. Residues 518–529 (QTRKPKRLKTGQ) are compositionally biased toward basic residues.

In terms of assembly, homodimer. Interacts with BZR2/BES1 through both C-terminal and bHLH domains. Also interacts with LHW. As to expression, expressed constitutively in roots.

The protein resides in the nucleus. Positive brassinosteroid-signaling protein. Transcription factor that bind specifically to the DNA sequence 5'-CANNTG-3'(E box). Can bind individually to the promoter as a homodimer or synergistically as a heterodimer with BZR2/BES1. Does not itself activate transcription but enhances BZR2/BES1-mediated target gene activation. In Arabidopsis thaliana (Mouse-ear cress), this protein is Transcription factor BIM1 (BIM1).